A 318-amino-acid polypeptide reads, in one-letter code: Protein-methionine-sulfoxide reductase catalytic subunit MsrP (318 aa).

A signal peptide (tat-type signal) is located at residues 1–40 (MKQLMMSDVTPEEIFNQRRQIIKSMGLGIATLGLPNIAFA). Mo-molybdopterin contacts are provided by residues Asn72, 75 to 76 (YE), Cys130, Thr165, Asn217, Arg222, and 233 to 235 (SIK).

The protein belongs to the MsrP family. Heterodimer of a catalytic subunit (MsrP) and a heme-binding subunit (MsrQ). Mo-molybdopterin serves as cofactor. In terms of processing, predicted to be exported by the Tat system. The position of the signal peptide cleavage has not been experimentally proven.

The protein resides in the periplasm. It catalyses the reaction L-methionyl-[protein] + a quinone + H2O = L-methionyl-(S)-S-oxide-[protein] + a quinol. The catalysed reaction is L-methionyl-[protein] + a quinone + H2O = L-methionyl-(R)-S-oxide-[protein] + a quinol. In terms of biological role, part of the MsrPQ system that repairs oxidized periplasmic proteins containing methionine sulfoxide residues (Met-O), using respiratory chain electrons. Thus protects these proteins from oxidative-stress damage caused by reactive species of oxygen and chlorine generated by the host defense mechanisms. MsrPQ is essential for the maintenance of envelope integrity under bleach stress, rescuing a wide series of structurally unrelated periplasmic proteins from methionine oxidation. The catalytic subunit MsrP is non-stereospecific, being able to reduce both (R-) and (S-) diastereoisomers of methionine sulfoxide. The protein is Protein-methionine-sulfoxide reductase catalytic subunit MsrP of Haemophilus ducreyi (strain 35000HP / ATCC 700724).